The sequence spans 492 residues: Transmembrane protein 39B (492 aa).

Residues Met1–Pro54 are disordered. N-linked (GlcNAc...) asparagine glycosylation occurs at Asn8. Residues Gly28–Ser53 show a composition bias toward low complexity. Transmembrane regions (helical) follow at residues Ser77–Ile97, Thr115–Gly135, Ser153–Leu175, Thr185–Leu205, Glu288–Val308, Leu322–Ser342, Ile421–Met441, and His447–Leu467.

Belongs to the TMEM39 family.

Its subcellular location is the endoplasmic reticulum membrane. May protect the cells against DNA damage caused by exposure to the cold-warming stress and facilitates tissue damage repair during the recovery phase. The sequence is that of Transmembrane protein 39B from Homo sapiens (Human).